The following is a 114-amino-acid chain: Small ribosomal subunit protein uS17 (114 aa).

Belongs to the universal ribosomal protein uS17 family. As to quaternary structure, part of the 30S ribosomal subunit.

In terms of biological role, one of the primary rRNA binding proteins, it binds specifically to the 5'-end of 16S ribosomal RNA. The sequence is that of Small ribosomal subunit protein uS17 from Sulfolobus acidocaldarius (strain ATCC 33909 / DSM 639 / JCM 8929 / NBRC 15157 / NCIMB 11770).